The primary structure comprises 450 residues: Phosphoglucosamine mutase 2 (450 aa).

S101 functions as the Phosphoserine intermediate in the catalytic mechanism. Mg(2+) contacts are provided by S101, D245, D247, and D249. Residue S101 is modified to Phosphoserine.

It belongs to the phosphohexose mutase family. Requires Mg(2+) as cofactor. Activated by phosphorylation.

The enzyme catalyses alpha-D-glucosamine 1-phosphate = D-glucosamine 6-phosphate. Functionally, catalyzes the conversion of glucosamine-6-phosphate to glucosamine-1-phosphate. This chain is Phosphoglucosamine mutase 2, found in Shewanella sp. (strain MR-7).